Here is a 160-residue protein sequence, read N- to C-terminus: Tic20 family protein (160 aa).

A run of 4 helical transmembrane segments spans residues 13 to 33 (FFSALIYVIPLIDAFMFGGFL), 53 to 73 (FYYQFPFASFIIFIVLFMAVV), 87 to 107 (MQAILIGILLSLFGLIVAYVI), and 122 to 142 (NFAFLGALACGFFGIVQSVLG).

It belongs to the Tic20 family.

The protein localises to the cell membrane. The chain is Tic20 family protein from Synechocystis sp. (strain ATCC 27184 / PCC 6803 / Kazusa).